We begin with the raw amino-acid sequence, 379 residues long: Histidinol-phosphate aminotransferase (379 aa).

K236 carries the N6-(pyridoxal phosphate)lysine modification.

Belongs to the class-II pyridoxal-phosphate-dependent aminotransferase family. Histidinol-phosphate aminotransferase subfamily. In terms of assembly, homodimer. Pyridoxal 5'-phosphate serves as cofactor.

The enzyme catalyses L-histidinol phosphate + 2-oxoglutarate = 3-(imidazol-4-yl)-2-oxopropyl phosphate + L-glutamate. It participates in amino-acid biosynthesis; L-histidine biosynthesis; L-histidine from 5-phospho-alpha-D-ribose 1-diphosphate: step 7/9. This is Histidinol-phosphate aminotransferase from Desulfotalea psychrophila (strain LSv54 / DSM 12343).